The primary structure comprises 324 residues: Probable metal transport system membrane protein CPn_0346/CP_0414/CPj0346/CpB0353 (324 aa).

The next 10 helical transmembrane spans lie at 1 to 21, 39 to 59, 64 to 84, 94 to 114, 125 to 145, 165 to 185, 201 to 221, 226 to 246, 252 to 272, and 286 to 306; these read MALG…SVFF, IQII…TFLV, AMYA…VCLF, GTLT…IYFI, STAL…VFMT, EDIF…IFAF, LGIP…ACLV, AVGV…AKVI, SLMA…PASS, and SGIS…ISYF.

It belongs to the ABC-3 integral membrane protein family.

It localises to the cell inner membrane. Its function is as follows. Part of an ATP-driven transport system CPn_0346/CPn_0347/CPn_0348/CPn_0349 for a metal. The polypeptide is Probable metal transport system membrane protein CPn_0346/CP_0414/CPj0346/CpB0353 (Chlamydia pneumoniae (Chlamydophila pneumoniae)).